The chain runs to 284 residues: 2-dehydro-3-deoxyphosphooctonate aldolase (284 aa).

Belongs to the KdsA family.

The protein localises to the cytoplasm. The enzyme catalyses D-arabinose 5-phosphate + phosphoenolpyruvate + H2O = 3-deoxy-alpha-D-manno-2-octulosonate-8-phosphate + phosphate. The protein operates within carbohydrate biosynthesis; 3-deoxy-D-manno-octulosonate biosynthesis; 3-deoxy-D-manno-octulosonate from D-ribulose 5-phosphate: step 2/3. It participates in bacterial outer membrane biogenesis; lipopolysaccharide biosynthesis. This Citrobacter koseri (strain ATCC BAA-895 / CDC 4225-83 / SGSC4696) protein is 2-dehydro-3-deoxyphosphooctonate aldolase.